An 88-amino-acid chain; its full sequence is Small ribosomal subunit protein bS20 (88 aa).

The segment covering 1–16 (MANTHSAKKATRKITR) has biased composition (basic residues). The disordered stretch occupies residues 1 to 20 (MANTHSAKKATRKITRRTAV).

This sequence belongs to the bacterial ribosomal protein bS20 family.

Functionally, binds directly to 16S ribosomal RNA. The chain is Small ribosomal subunit protein bS20 from Nitrobacter hamburgensis (strain DSM 10229 / NCIMB 13809 / X14).